Consider the following 163-residue polypeptide: NADH-quinone oxidoreductase subunit I (163 aa).

2 4Fe-4S ferredoxin-type domains span residues 54–84 (LRRYPNGEERCIACKLCEAVCPALAITIDSA) and 94–123 (TRYDIDLFKCIFCGFCEESCPVDSIVETHI). Positions 64, 67, 70, 74, 103, 106, 109, and 113 each coordinate [4Fe-4S] cluster.

Belongs to the complex I 23 kDa subunit family. As to quaternary structure, NDH-1 is composed of 14 different subunits. Subunits NuoA, H, J, K, L, M, N constitute the membrane sector of the complex. [4Fe-4S] cluster serves as cofactor.

The protein localises to the cell inner membrane. The enzyme catalyses a quinone + NADH + 5 H(+)(in) = a quinol + NAD(+) + 4 H(+)(out). Its function is as follows. NDH-1 shuttles electrons from NADH, via FMN and iron-sulfur (Fe-S) centers, to quinones in the respiratory chain. The immediate electron acceptor for the enzyme in this species is believed to be ubiquinone. Couples the redox reaction to proton translocation (for every two electrons transferred, four hydrogen ions are translocated across the cytoplasmic membrane), and thus conserves the redox energy in a proton gradient. This is NADH-quinone oxidoreductase subunit I from Xanthomonas oryzae pv. oryzae (strain KACC10331 / KXO85).